Consider the following 124-residue polypeptide: MARIAGVDLPREKRIEIALTYIFGIGLSRSKQILRDTGVDPNKRVKDLTDDEVAKIRDYIDKNFKVEGELRAEIARNIKRLIDIRCYRGLRHLRGLPVRGQRTRTNARTRKGPRKTVGVMRKKS.

Residues 99-124 (RGQRTRTNARTRKGPRKTVGVMRKKS) are disordered. Residues 101–124 (QRTRTNARTRKGPRKTVGVMRKKS) show a composition bias toward basic residues.

Belongs to the universal ribosomal protein uS13 family. In terms of assembly, part of the 30S ribosomal subunit. Forms a loose heterodimer with protein S19. Forms two bridges to the 50S subunit in the 70S ribosome.

In terms of biological role, located at the top of the head of the 30S subunit, it contacts several helices of the 16S rRNA. In the 70S ribosome it contacts the 23S rRNA (bridge B1a) and protein L5 of the 50S subunit (bridge B1b), connecting the 2 subunits; these bridges are implicated in subunit movement. Contacts the tRNAs in the A and P-sites. The protein is Small ribosomal subunit protein uS13 of Caldicellulosiruptor saccharolyticus (strain ATCC 43494 / DSM 8903 / Tp8T 6331).